Consider the following 71-residue polypeptide: HSEGTFSNDYSKYLETQRAQDFVQWLMNSXXXXXXXXHADGTYTSDVSAYLQDQAAKDFITWLKSGQPKQE.

Belongs to the glucagon family.

Its subcellular location is the secreted. Plays a key role in glucose metabolism and homeostasis. Regulates blood glucose by increasing gluconeogenesis and decreasing glycolysis. The sequence is that of Pro-glucagon (gcg) from Piaractus mesopotamicus (Small-scaled pacu).